Here is a 145-residue protein sequence, read N- to C-terminus: MKLLIQRVSAARVEVEGEVVGGIDQGLLALVGIEPQDDQASLTRALHKLLNYRVFSDEAGKMNRSLTDVQGGLLLVSQFTLAADTKSGMRPSFSSAAPPAQGEALFDALVEAARARHPQVATGRFGANMQVHLVNDGPVTFLLEV.

Residues Gly-137–Pro-138 carry the Gly-cisPro motif, important for rejection of L-amino acids motif.

Belongs to the DTD family. In terms of assembly, homodimer.

It localises to the cytoplasm. It catalyses the reaction glycyl-tRNA(Ala) + H2O = tRNA(Ala) + glycine + H(+). The catalysed reaction is a D-aminoacyl-tRNA + H2O = a tRNA + a D-alpha-amino acid + H(+). Functionally, an aminoacyl-tRNA editing enzyme that deacylates mischarged D-aminoacyl-tRNAs. Also deacylates mischarged glycyl-tRNA(Ala), protecting cells against glycine mischarging by AlaRS. Acts via tRNA-based rather than protein-based catalysis; rejects L-amino acids rather than detecting D-amino acids in the active site. By recycling D-aminoacyl-tRNA to D-amino acids and free tRNA molecules, this enzyme counteracts the toxicity associated with the formation of D-aminoacyl-tRNA entities in vivo and helps enforce protein L-homochirality. This Ectopseudomonas mendocina (strain ymp) (Pseudomonas mendocina) protein is D-aminoacyl-tRNA deacylase.